A 225-amino-acid chain; its full sequence is NAD(P)H-quinone oxidoreductase subunit K, chloroplastic (225 aa).

The [4Fe-4S] cluster site is built by Cys-43, Cys-44, Cys-108, and Cys-139.

It belongs to the complex I 20 kDa subunit family. NDH is composed of at least 16 different subunits, 5 of which are encoded in the nucleus. Requires [4Fe-4S] cluster as cofactor.

Its subcellular location is the plastid. The protein resides in the chloroplast thylakoid membrane. The enzyme catalyses a plastoquinone + NADH + (n+1) H(+)(in) = a plastoquinol + NAD(+) + n H(+)(out). The catalysed reaction is a plastoquinone + NADPH + (n+1) H(+)(in) = a plastoquinol + NADP(+) + n H(+)(out). Functionally, NDH shuttles electrons from NAD(P)H:plastoquinone, via FMN and iron-sulfur (Fe-S) centers, to quinones in the photosynthetic chain and possibly in a chloroplast respiratory chain. The immediate electron acceptor for the enzyme in this species is believed to be plastoquinone. Couples the redox reaction to proton translocation, and thus conserves the redox energy in a proton gradient. In Barbarea verna (Land cress), this protein is NAD(P)H-quinone oxidoreductase subunit K, chloroplastic.